A 444-amino-acid polypeptide reads, in one-letter code: C4-dicarboxylate transport protein (444 aa).

9 consecutive transmembrane segments (helical) span residues 18 to 40 (FYSHLYVQVLVAIAAGILLGHFY), 53 to 75 (AFIKLVKMIIAPVIFLTVATGIA), 90 to 112 (AMLYFLTFSTLALIIGLIVANVV), 142 to 159 (IVGFLTNIIPTTIVGAFA), 163 to 180 (ILQVLFFSVLFGIALAMV), 201 to 222 (LVAILMKAAPIGAFGAMAFTIG), 232 to 254 (LAMLIGTFYITSLLFVFIVLGAV), 327 to 349 (LFIAQATGIHLSWGDQILLLLVA), and 364 to 386 (FITLAATLSVVPSVPVAGMALIL).

Belongs to the dicarboxylate/amino acid:cation symporter (DAACS) (TC 2.A.23) family.

The protein resides in the cell inner membrane. In terms of biological role, responsible for the transport of dicarboxylates such as succinate, fumarate, and malate from the periplasm across the inner membrane. This transport system plays an important role in the energy supply of rhizobium-legume symbionts. The chain is C4-dicarboxylate transport protein (dctA) from Rhizobium leguminosarum.